We begin with the raw amino-acid sequence, 461 residues long: tRNA modification GTPase MnmE (461 aa).

(6S)-5-formyl-5,6,7,8-tetrahydrofolate-binding residues include arginine 22, glutamate 87, and arginine 126. In terms of domain architecture, TrmE-type G spans 223–382; the sequence is GLSTVILGRP…LEEAIAALFF (160 aa). Position 233 (asparagine 233) interacts with K(+). GTP-binding positions include 233–238, 252–258, and 277–280; these read NVGKSS, TDIAGTT, and DTAG. Mg(2+) is bound at residue serine 237. Threonine 252, isoleucine 254, and threonine 257 together coordinate K(+). Threonine 258 is a Mg(2+) binding site. Lysine 461 contributes to the (6S)-5-formyl-5,6,7,8-tetrahydrofolate binding site.

The protein belongs to the TRAFAC class TrmE-Era-EngA-EngB-Septin-like GTPase superfamily. TrmE GTPase family. Homodimer. Heterotetramer of two MnmE and two MnmG subunits. K(+) is required as a cofactor.

The protein resides in the cytoplasm. In terms of biological role, exhibits a very high intrinsic GTPase hydrolysis rate. Involved in the addition of a carboxymethylaminomethyl (cmnm) group at the wobble position (U34) of certain tRNAs, forming tRNA-cmnm(5)s(2)U34. The chain is tRNA modification GTPase MnmE from Lysinibacillus sphaericus (strain C3-41).